Reading from the N-terminus, the 147-residue chain is Cysteine proteinase inhibitor 2 (147 aa).

The first 27 residues, 1 to 27, serve as a signal peptide directing secretion; the sequence is MATMLKVSLVLSLLGFLVIAVVTPSAA. Positions 87–117 constitute a Cystatin domain; sequence LQFSRVVSAQKQVVAGLKYYLRIEVTQPNGS. Positions 98–102 match the Secondary area of contact motif; it reads QVVAG. Asn115 carries N-linked (GlcNAc...) asparagine glycosylation.

Belongs to the cystatin family. Phytocystatin subfamily.

The protein resides in the secreted. Its function is as follows. Specific inhibitor of cysteine proteinases. Probably involved in the regulation of endogenous processes and in defense against pests and pathogens. In Arabidopsis thaliana (Mouse-ear cress), this protein is Cysteine proteinase inhibitor 2 (CYS2).